The chain runs to 292 residues: GTP cyclohydrolase FolE2 (292 aa).

The protein belongs to the GTP cyclohydrolase IV family.

The catalysed reaction is GTP + H2O = 7,8-dihydroneopterin 3'-triphosphate + formate + H(+). It functions in the pathway cofactor biosynthesis; 7,8-dihydroneopterin triphosphate biosynthesis; 7,8-dihydroneopterin triphosphate from GTP: step 1/1. Functionally, converts GTP to 7,8-dihydroneopterin triphosphate. The chain is GTP cyclohydrolase FolE2 from Staphylococcus haemolyticus (strain JCSC1435).